The chain runs to 92 residues: LYR motif-containing protein 4A (92 aa).

It belongs to the complex I LYR family.

The polypeptide is LYR motif-containing protein 4A (lyrm4a) (Salmo salar (Atlantic salmon)).